The chain runs to 242 residues: Small ribosomal subunit protein uS2 (242 aa).

Belongs to the universal ribosomal protein uS2 family.

The polypeptide is Small ribosomal subunit protein uS2 (Pseudoalteromonas translucida (strain TAC 125)).